The primary structure comprises 126 residues: Large-conductance mechanosensitive channel (126 aa).

2 helical membrane passes run 8 to 28 (FAMR…AAFT) and 70 to 90 (IQQI…VKVI).

The protein belongs to the MscL family. As to quaternary structure, homopentamer.

Its subcellular location is the cell membrane. Its function is as follows. Channel that opens in response to stretch forces in the membrane lipid bilayer. May participate in the regulation of osmotic pressure changes within the cell. The sequence is that of Large-conductance mechanosensitive channel from Exiguobacterium sp. (strain ATCC BAA-1283 / AT1b).